Consider the following 321-residue polypeptide: Cytochrome c biogenesis protein CcsA (321 aa).

8 helical membrane passes run 9-29, 44-64, 71-91, 98-118, 143-163, 225-245, 252-272, and 286-306; these read ILTH…LMNL, GMIA…IYSG, LYES…VPYF, FSAI…SGLL, MLLS…LLVI, VISL…VWAN, WNWD…AIYL, and AIVA…VNLL.

This sequence belongs to the CcmF/CycK/Ccl1/NrfE/CcsA family. As to quaternary structure, may interact with Ccs1.

Its subcellular location is the plastid. The protein localises to the chloroplast thylakoid membrane. Its function is as follows. Required during biogenesis of c-type cytochromes (cytochrome c6 and cytochrome f) at the step of heme attachment. This chain is Cytochrome c biogenesis protein CcsA, found in Acorus calamus var. americanus (American sweet flag).